A 397-amino-acid chain; its full sequence is Imidazolonepropionase (397 aa).

Positions 66 and 68 each coordinate Fe(3+). 2 residues coordinate Zn(2+): H66 and H68. 4-imidazolone-5-propanoate is bound by residues R75, Y138, and H171. Residue Y138 coordinates N-formimidoyl-L-glutamate. H236 contributes to the Fe(3+) binding site. Position 236 (H236) interacts with Zn(2+). Position 239 (Q239) interacts with 4-imidazolone-5-propanoate. D311 serves as a coordination point for Fe(3+). Position 311 (D311) interacts with Zn(2+). 2 residues coordinate N-formimidoyl-L-glutamate: N313 and G315. S316 is a binding site for 4-imidazolone-5-propanoate.

This sequence belongs to the metallo-dependent hydrolases superfamily. HutI family. It depends on Zn(2+) as a cofactor. Fe(3+) is required as a cofactor.

It localises to the cytoplasm. It catalyses the reaction 4-imidazolone-5-propanoate + H2O = N-formimidoyl-L-glutamate. It functions in the pathway amino-acid degradation; L-histidine degradation into L-glutamate; N-formimidoyl-L-glutamate from L-histidine: step 3/3. In terms of biological role, catalyzes the hydrolytic cleavage of the carbon-nitrogen bond in imidazolone-5-propanoate to yield N-formimidoyl-L-glutamate. It is the third step in the universal histidine degradation pathway. The sequence is that of Imidazolonepropionase from Roseobacter denitrificans (strain ATCC 33942 / OCh 114) (Erythrobacter sp. (strain OCh 114)).